The chain runs to 336 residues: GTPase Obg (336 aa).

The 159-residue stretch at 1–159 (MKFVDSATVF…LELAMELKLM (159 aa)) folds into the Obg domain. Residues 120–143 (GGHGGRGNQHFATSTNQAPRRSEP) form a disordered region. Positions 129 to 138 (HFATSTNQAP) are enriched in polar residues. An OBG-type G domain is found at 160 to 323 (ADVGLVGFPN…LKDELWRQVS (164 aa)). Residues 166-173 (GFPNAGKS), 191-195 (FTTLV), 213-216 (DIPG), 280-283 (TKMD), and 304-306 (SSV) contribute to the GTP site. 2 residues coordinate Mg(2+): Ser173 and Thr193.

This sequence belongs to the TRAFAC class OBG-HflX-like GTPase superfamily. OBG GTPase family. Monomer. Requires Mg(2+) as cofactor.

It localises to the cytoplasm. Its function is as follows. An essential GTPase which binds GTP, GDP and possibly (p)ppGpp with moderate affinity, with high nucleotide exchange rates and a fairly low GTP hydrolysis rate. Plays a role in control of the cell cycle, stress response, ribosome biogenesis and in those bacteria that undergo differentiation, in morphogenesis control. This is GTPase Obg from Chlorobium phaeovibrioides (strain DSM 265 / 1930) (Prosthecochloris vibrioformis (strain DSM 265)).